Reading from the N-terminus, the 515-residue chain is Glucose-6-phosphate 1-dehydrogenase (515 aa).

A2 is modified (N-acetylalanine). A Phosphoserine modification is found at S8. T10 carries the phosphothreonine modification. NADP(+) is bound by residues 38-45 (GASGDLAK) and R72. Position 89 is an N6-acetyllysine (K89). NADP(+) is bound by residues Y147 and K171. Residues K171, 201–205 (HYLGK), E239, and D258 contribute to the D-glucose 6-phosphate site. Residue K171 is modified to N6-(2-hydroxyisobutyryl)lysine; alternate. Residue K171 is modified to N6-acetyllysine; alternate. H263 functions as the Proton acceptor in the catalytic mechanism. R357 contributes to the NADP(+) binding site. K360 and R365 together coordinate D-glucose 6-phosphate. Positions 366, 370, and 393 each coordinate NADP(+). Position 395 (Q395) interacts with D-glucose 6-phosphate. NADP(+)-binding positions include 401-403 (YTK) and 421-423 (DLT). N6-acetyllysine is present on K403. K432 is modified (N6-acetyllysine). R487 serves as a coordination point for NADP(+). An N6-acetyllysine modification is found at K497. NADP(+) contacts are provided by Y503 and W509. A Phosphotyrosine modification is found at Y503.

It belongs to the glucose-6-phosphate dehydrogenase family. Homotetramer; dimer of dimers. Interacts with SIRT2; the interaction is enhanced by H(2)O(2) treatment. Forms a ternary complex with ALDOB and TP53; this interaction is direct. ALDOB stabilizes the complex inhibiting G6PD activity and keeping oxidative pentose phosphate metabolism in check. Post-translationally, acetylated by ELP3 at Lys-403; acetylation inhibits its homodimerization and enzyme activity. Deacetylated by SIRT2 at Lys-403; deacetylation stimulates its enzyme activity.

The protein resides in the cytoplasm. The protein localises to the cytosol. It localises to the membrane. It carries out the reaction D-glucose 6-phosphate + NADP(+) = 6-phospho-D-glucono-1,5-lactone + NADPH + H(+). It functions in the pathway carbohydrate degradation; pentose phosphate pathway; D-ribulose 5-phosphate from D-glucose 6-phosphate (oxidative stage): step 1/3. Functionally, cytosolic glucose-6-phosphate dehydrogenase that catalyzes the first and rate-limiting step of the oxidative branch within the pentose phosphate pathway/shunt, an alternative route to glycolysis for the dissimilation of carbohydrates and a major source of reducing power and metabolic intermediates for fatty acid and nucleic acid biosynthetic processes. The polypeptide is Glucose-6-phosphate 1-dehydrogenase (G6PD) (Cricetulus griseus (Chinese hamster)).